A 169-amino-acid chain; its full sequence is Proepiregulin (169 aa).

The signal sequence occupies residues 1–29; the sequence is MTAGRRMEMLCAGRVPALLLCLGFHLLQA. Positions 30–62 are excised as a propeptide; that stretch reads VLSTTVIPSCIPGESSDNCTALVQTEDNPRVAQ. Asparagine 47 is a glycosylation site (N-linked (GlcNAc...) asparagine). Over 60-119 the chain is Extracellular; it reads VAQVSITKCSSDMNGYCLHGQCIYLVDMSQNYCRCEVGYTGVRCEHFFLTVHQPLSKEYV. The EGF-like domain maps to 64-104; sequence SITKCSSDMNGYCLHGQCIYLVDMSQNYCRCEVGYTGVRCE. Disulfide bonds link cysteine 68–cysteine 81, cysteine 76–cysteine 92, and cysteine 94–cysteine 103. Positions 109-169 are cleaved as a propeptide — removed in mature form; sequence TVHQPLSKEY…TSGDPELPQV (61 aa). The chain crosses the membrane as a helical span at residues 120 to 140; sequence ALTVILIILFLITVVGSTYYF. Residues 141–169 are Cytoplasmic-facing; sequence CRWYRNRKSKEPKKEYERVTSGDPELPQV.

Interacts with EGFR and ERBB4. As to expression, in normal adults, expressed predominantly in the placenta and peripheral blood leukocytes. High levels were detected in carcinomas of the bladder, lung, kidney and colon.

It localises to the secreted. The protein resides in the extracellular space. The protein localises to the cell membrane. Its function is as follows. Ligand of the EGF receptor/EGFR and ERBB4. Stimulates EGFR and ERBB4 tyrosine phosphorylation. Contributes to inflammation, wound healing, tissue repair, and oocyte maturation by regulating angiogenesis and vascular remodeling and by stimulating cell proliferation. The protein is Proepiregulin (EREG) of Homo sapiens (Human).